A 141-amino-acid polypeptide reads, in one-letter code: Small ribosomal subunit protein uS12 (141 aa).

Asp-102 carries the 3-methylthioaspartic acid modification. A disordered region spans residues 115 to 141 (GDASGVEKRRQQRSLYGAKRPKKEASK).

The protein belongs to the universal ribosomal protein uS12 family. Part of the 30S ribosomal subunit. Contacts proteins S8 and S17. May interact with IF1 in the 30S initiation complex.

With S4 and S5 plays an important role in translational accuracy. In terms of biological role, interacts with and stabilizes bases of the 16S rRNA that are involved in tRNA selection in the A site and with the mRNA backbone. Located at the interface of the 30S and 50S subunits, it traverses the body of the 30S subunit contacting proteins on the other side and probably holding the rRNA structure together. The combined cluster of proteins S8, S12 and S17 appears to hold together the shoulder and platform of the 30S subunit. In Ureaplasma parvum serovar 3 (strain ATCC 27815 / 27 / NCTC 11736), this protein is Small ribosomal subunit protein uS12.